The sequence spans 248 residues: mRNA-decapping protein OPG122 (248 aa).

In terms of domain architecture, Nudix hydrolase spans 45 to 227; sequence HKRVSVSAIL…IAKYALDTAK (183 aa). The short motif at 126-147 is the Nudix box element; it reads GIPKRGENVPECLSREIKEEVN. Position 132 (E132) interacts with Mg(2+). The active-site Nucleophile is E141. E145 lines the Mn(2+) pocket. Residue D167 coordinates Mg(2+).

This sequence belongs to the Nudix hydrolase family. Requires Mg(2+) as cofactor. The cofactor is Mn(2+).

The protein localises to the host mitochondrion. In terms of biological role, decapping enzyme that remove the protective 5'-cap from both host and viral mRNAs to commit transcripts for decay by the cellular exonuclease XRN1. Preferentially targets spliced mRNAs and since all viral genes are intronless, it preferentially targets host over viral transcripts. Acceleration of the turnover of cellular transcripts promotes the shutoff of host protein synthesis and therefore diminish the magnitude of antiviral response. This is mRNA-decapping protein OPG122 (OPG122) from Bos taurus (Bovine).